A 270-amino-acid chain; its full sequence is Protein-ADP-ribose hydrolase (270 aa).

Residues Val73–Asn267 enclose the Macro domain. The ADP-D-ribose site is built by Asp92, Ile93, and Asn106. 3 residues coordinate Zn(2+): Cys112, His117, and Cys119. Residues Cys119, Ile120, Asp121, Ser212, Thr213, Gly214, Glu215, and Phe216 each coordinate ADP-D-ribose.

Belongs to the MacroD-type family. Zn-Macro subfamily. Zn(2+) is required as a cofactor.

It catalyses the reaction 4-O-(ADP-D-ribosyl)-L-aspartyl-[protein] + H2O = L-aspartyl-[protein] + ADP-D-ribose + H(+). Functionally, ADP-ribosylhydrolase that specifically reverses the SirTM-mediated mono-ADP-ribosylation at an asparatate residue of GcvH-L, by releasing ADP-ribose from the target protein. May play a role in the regulation of the response to host-induced oxidative stress. The sequence is that of Protein-ADP-ribose hydrolase from Streptococcus pyogenes serotype M3 (strain ATCC BAA-595 / MGAS315).